A 764-amino-acid chain; its full sequence is Polyribonucleotide nucleotidyltransferase (764 aa).

Residues aspartate 555 and aspartate 561 each coordinate Mg(2+). Positions 621-680 constitute a KH domain; sequence PHITSINIPQNKIGEVIGPKGKTINQITEETGANITIEDDGTVFISAVGGESAREAEEKI. The S1 motif domain maps to 692 to 761; sequence GDRFLGTVVK…NRGKISLVLV (70 aa).

Belongs to the polyribonucleotide nucleotidyltransferase family. The cofactor is Mg(2+).

The protein resides in the cytoplasm. The catalysed reaction is RNA(n+1) + phosphate = RNA(n) + a ribonucleoside 5'-diphosphate. Functionally, involved in mRNA degradation. Catalyzes the phosphorolysis of single-stranded polyribonucleotides processively in the 3'- to 5'-direction. In Corynebacterium jeikeium (strain K411), this protein is Polyribonucleotide nucleotidyltransferase.